Here is a 498-residue protein sequence, read N- to C-terminus: NAD(P)H-quinone oxidoreductase chain 4, chloroplastic (498 aa).

14 consecutive transmembrane segments (helical) span residues 4-24, 37-57, 87-107, 111-131, 134-154, 167-187, 207-227, 242-262, 274-294, 305-325, 331-351, 386-406, 417-437, and 461-481; these read LPWLTLIVLFPFSASFLIPLL, LGICALEFLLITFTFCCQFHL, MGLILLTGFITTLAILAAWPV, VRLFYFLMLAMYSGQIGLFAS, ILLFFFMWELELIPVYLLLSM, FLLYTAGGSIFLLVGSLTMGL, IAVETALYFSFLIAYAVKLPI, HYSTCMLLAGILLKMGGYGLI, FLFSPLLVTMGAVQIAYASLI, IAYSSVSHMGFVIIGISSITD, AILQMISHGLIGAALFFLAGI, LALPGMSSFVAEFLIFLGIVT, IILFIGAIGVILTPIYLLSML, and IFISVFILLPILGIGIYPNLV.

It belongs to the complex I subunit 4 family.

The protein resides in the plastid. It is found in the chloroplast thylakoid membrane. It catalyses the reaction a plastoquinone + NADH + (n+1) H(+)(in) = a plastoquinol + NAD(+) + n H(+)(out). It carries out the reaction a plastoquinone + NADPH + (n+1) H(+)(in) = a plastoquinol + NADP(+) + n H(+)(out). The polypeptide is NAD(P)H-quinone oxidoreductase chain 4, chloroplastic (Psilotum nudum (Whisk fern)).